A 736-amino-acid polypeptide reads, in one-letter code: Catalase-1 (736 aa).

The tract at residues 1-29 (MSNIISQAGQKAKEALTSAPSSKKVDDLK) is disordered. Arginine 89 serves as a coordination point for heme. The active site involves histidine 92. Residue arginine 129 participates in heme binding. Asparagine 165 is an active-site residue. Residues phenylalanine 178, arginine 375, tyrosine 379, and arginine 386 each contribute to the heme site. Residues 356 to 379 (CTSHVVNGIGFSDDPLLQGRNFSY) constitute a cross-link (3-(S-cysteinyl)-tyrosine (Cys-Tyr)).

It belongs to the catalase family. As to quaternary structure, homotetramer. It depends on heme as a cofactor. In terms of processing, glycosylated; with alpha-glucose and/or alpha-mannose.

Its subcellular location is the secreted. The protein resides in the cell wall. The enzyme catalyses 2 H2O2 = O2 + 2 H2O. Functionally, occurs in almost all aerobically respiring organisms and serves to protect cells from the toxic effects of hydrogen peroxide. The chain is Catalase-1 (cat-1) from Neurospora crassa (strain ATCC 24698 / 74-OR23-1A / CBS 708.71 / DSM 1257 / FGSC 987).